A 605-amino-acid chain; its full sequence is UvrABC system protein C (605 aa).

Residues glutamine 14–isoleucine 92 form the GIY-YIG domain. One can recognise a UVR domain in the interval lysine 202–isoleucine 237.

Belongs to the UvrC family. As to quaternary structure, interacts with UvrB in an incision complex.

The protein localises to the cytoplasm. Its function is as follows. The UvrABC repair system catalyzes the recognition and processing of DNA lesions. UvrC both incises the 5' and 3' sides of the lesion. The N-terminal half is responsible for the 3' incision and the C-terminal half is responsible for the 5' incision. The protein is UvrABC system protein C of Wolbachia pipientis subsp. Culex pipiens (strain wPip).